The following is a 238-amino-acid chain: Dof zinc finger protein MNB1A (238 aa).

The segment covering 1–13 (MQEASSAAAAGAE) has biased composition (low complexity). The tract at residues 1–48 (MQEASSAAAAGAEPGRRAAQHQFAGVDLRRPKGYAAPAPAPAVGEGDP) is disordered. A Dof-type zinc finger spans residues 47-101 (DPCPRCASRDTKFCYYNNYNTSQPRHFCKGCRRYWTKGGTLRNVPVGGGTRKKPS). Residues cysteine 49, cysteine 52, cysteine 74, and cysteine 77 each contribute to the Zn(2+) site. The interval 85-155 (GTLRNVPVGG…TATTTTTTSE (71 aa)) is disordered. The span at 119–130 (PKKKPASKKRRV) shows a compositional bias: basic residues. A compositionally biased stretch (low complexity) spans 138–155 (ATAADPGKTATTTTTTSE).

As to expression, expressed in all tissues examined.

The protein resides in the nucleus. Transcription factor that binds specifically to a 5'-AA[AG]G-3' consensus core sequence at the MNF1-binding site. The chain is Dof zinc finger protein MNB1A (MNB1A) from Zea mays (Maize).